Reading from the N-terminus, the 860-residue chain is DDB1- and CUL4-associated factor 6 (860 aa).

5 WD repeats span residues valine 49–threonine 88, glycine 92–arginine 133, cysteine 139–lysine 179, asparagine 189–threonine 229, and asparagine 251–leucine 290. Basic and acidic residues-rich tracts occupy residues arginine 288–arginine 303 and leucine 312–glutamate 334. Disordered regions lie at residues arginine 288 to serine 340, glutamate 355 to leucine 392, glutamine 407 to threonine 490, and isoleucine 502 to aspartate 675. Position 336 is a phosphoserine (serine 336). 2 stretches are compositionally biased toward polar residues: residues aspartate 379–serine 388 and leucine 409–alanine 421. Residues histidine 422 to aspartate 441 show a composition bias toward low complexity. The span at histidine 457–serine 467 shows a compositional bias: basic and acidic residues. Residues histidine 480–threonine 490 are compositionally biased toward polar residues. Residues isoleucine 502–serine 511 are compositionally biased toward low complexity. The span at serine 535–lysine 549 shows a compositional bias: basic and acidic residues. Low complexity predominate over residues threonine 614 to asparagine 626. The span at proline 627–threonine 636 shows a compositional bias: polar residues. Serine 649 carries the phosphoserine modification. A Phosphothreonine modification is found at threonine 654. Residue serine 657 is modified to Phosphoserine. An IQ domain is found at arginine 676–arginine 705. WD repeat units follow at residues asparagine 718 to leucine 756 and alanine 759 to asparagine 798. Phosphoserine is present on residues serine 847 and serine 850.

In terms of assembly, interacts with the nuclear receptors NR3C1 and AR in the presence of ligand. Interacts with DDB1, CUL4A and CUL4B. Highly expressed in skeletal muscle and testis. Expressed to a lesser degree in heart, prostate, and adrenal gland.

The protein resides in the nucleus. It participates in protein modification; protein ubiquitination. In terms of biological role, ligand-dependent coactivator of nuclear receptors. Enhance transcriptional activity of the nuclear receptors NR3C1 and AR. May function as a substrate receptor for CUL4-DDB1 E3 ubiquitin-protein ligase complex. The chain is DDB1- and CUL4-associated factor 6 (DCAF6) from Homo sapiens (Human).